The primary structure comprises 205 residues: Peptidyl-tRNA hydrolase (205 aa).

Residue Tyr-14 participates in tRNA binding. Catalysis depends on His-19, which acts as the Proton acceptor. 3 residues coordinate tRNA: Tyr-64, Asn-66, and Asn-112.

The protein belongs to the PTH family. Monomer.

The protein localises to the cytoplasm. It catalyses the reaction an N-acyl-L-alpha-aminoacyl-tRNA + H2O = an N-acyl-L-amino acid + a tRNA + H(+). Its function is as follows. Hydrolyzes ribosome-free peptidyl-tRNAs (with 1 or more amino acids incorporated), which drop off the ribosome during protein synthesis, or as a result of ribosome stalling. Catalyzes the release of premature peptidyl moieties from peptidyl-tRNA molecules trapped in stalled 50S ribosomal subunits, and thus maintains levels of free tRNAs and 50S ribosomes. This is Peptidyl-tRNA hydrolase from Parvibaculum lavamentivorans (strain DS-1 / DSM 13023 / NCIMB 13966).